Consider the following 204-residue polypeptide: Pneumococcal vaccine antigen A (204 aa).

It localises to the cell surface. This Streptococcus pneumoniae serotype 4 (strain ATCC BAA-334 / TIGR4) protein is Pneumococcal vaccine antigen A (pvaA).